The chain runs to 268 residues: Single-stranded DNA-binding protein WHY3, chloroplastic (268 aa).

The N-terminal 75 residues, 1–75 (MSQLLSSPPM…KQRFGDSSSS (75 aa)), are a transit peptide targeting the chloroplast. Residues 93-98 (KGKAAL) are required for ssDNA binding. Residues 171–185 (KGKGSDEGKVRKVLK) carry the Nuclear localization signal motif.

Belongs to the Whirly family. As to quaternary structure, homotetramer.

Its subcellular location is the plastid. It is found in the chloroplast. It localises to the nucleus. Its function is as follows. Single-stranded DNA-binding protein that functions in both chloroplasts and nucleus. In chloroplasts, maintains plastid genome stability by preventing break-induced and short homology-dependent illegitimate recombinations. In the nucleus, is recruited to a distal element upstream of the kinesin KP1 to mediate the transcriptional repression of KP1. Can bind double-stranded DNA in vivo. The chain is Single-stranded DNA-binding protein WHY3, chloroplastic (WHY3) from Arabidopsis thaliana (Mouse-ear cress).